Reading from the N-terminus, the 162-residue chain is Lipid droplet assembly factor 1-A (162 aa).

The Cytoplasmic segment spans residues 1–42 (MASAENLYQEKMQELQKQMNKVMQTINNHSKVEAFLNSPFGQ). A helical transmembrane segment spans residues 43-63 (YLDQHPFVTLSLLVFISLSAV). Over 64–65 (PV) the chain is Lumenal. Residues 66 to 86 (GIFLTLIAGTAIAVCLAVLII) form a helical membrane-spanning segment. Position 87 (E87) is a topological domain, cytoplasmic. A helical membrane pass occupies residues 88-108 (GIVISVGGIALLCILCGLAVM). S109 is a topological domain (lumenal). A helical membrane pass occupies residues 110-130 (LGVAAVLCVSYVAGSSVLNYI). Residues 131–162 (HAYRVTVGTRGRSGPISLNHETTTAEKSYRSS) lie on the Cytoplasmic side of the membrane.

It belongs to the LDAF1 family.

It is found in the endoplasmic reticulum membrane. Its subcellular location is the lipid droplet. Plays an important role in the formation of lipid droplets (LD) which are storage organelles at the center of lipid and energy homeostasis. The sequence is that of Lipid droplet assembly factor 1-A from Xenopus laevis (African clawed frog).